The chain runs to 225 residues: Guanylate kinase (225 aa).

The region spanning 20–198 is the Guanylate kinase-like domain; the sequence is GNLFMVVAPS…ALSELQCLVA (179 aa). 27–34 is an ATP binding site; that stretch reads APSGAGKS.

It belongs to the guanylate kinase family.

The protein resides in the cytoplasm. It catalyses the reaction GMP + ATP = GDP + ADP. Its function is as follows. Essential for recycling GMP and indirectly, cGMP. In Paraburkholderia xenovorans (strain LB400), this protein is Guanylate kinase.